Consider the following 449-residue polypeptide: Glucose-6-phosphate isomerase (449 aa).

Catalysis depends on Glu291, which acts as the Proton donor. Residues His312 and Lys426 contribute to the active site.

The protein belongs to the GPI family.

It localises to the cytoplasm. It carries out the reaction alpha-D-glucose 6-phosphate = beta-D-fructose 6-phosphate. It functions in the pathway carbohydrate biosynthesis; gluconeogenesis. Its pathway is carbohydrate degradation; glycolysis; D-glyceraldehyde 3-phosphate and glycerone phosphate from D-glucose: step 2/4. Catalyzes the reversible isomerization of glucose-6-phosphate to fructose-6-phosphate. The protein is Glucose-6-phosphate isomerase of Streptococcus pyogenes serotype M4 (strain MGAS10750).